Here is a 737-residue protein sequence, read N- to C-terminus: Procollagen-lysine,2-oxoglutarate 5-dioxygenase 2 (737 aa).

An N-terminal signal peptide occupies residues 1-25 (MGDRGARPGRLMPMLALLSWAAGLG). Asparagine 63 and asparagine 209 each carry an N-linked (GlcNAc...) asparagine glycan. The residue at position 320 (threonine 320) is a Phosphothreonine. Tyrosine 323 carries the post-translational modification Phosphotyrosine. N-linked (GlcNAc...) asparagine glycans are attached at residues asparagine 365 and asparagine 522. One can recognise a Fe2OG dioxygenase domain in the interval 644–737 (KGFALLNFVV…RYIAVSFIDP (94 aa)). Fe cation is bound by residues histidine 666 and aspartate 668. The N-linked (GlcNAc...) asparagine glycan is linked to asparagine 696. At lysine 704 the chain carries N6-succinyllysine. Residue histidine 718 coordinates Fe cation. The N-linked (GlcNAc...) asparagine glycan is linked to asparagine 725. Arginine 728 is an active-site residue.

As to quaternary structure, homodimer. Requires Fe(2+) as cofactor. L-ascorbate is required as a cofactor. As to expression, is highly expressed in the heart, lung, kidney, eye, ovary and placenta.

It localises to the rough endoplasmic reticulum membrane. It catalyses the reaction L-lysyl-[collagen] + 2-oxoglutarate + O2 = (5R)-5-hydroxy-L-lysyl-[collagen] + succinate + CO2. Its function is as follows. Forms hydroxylysine residues in -Xaa-Lys-Gly- sequences in collagens. These hydroxylysines serve as sites of attachment for carbohydrate units and are essential for the stability of the intermolecular collagen cross-links. In Mus musculus (Mouse), this protein is Procollagen-lysine,2-oxoglutarate 5-dioxygenase 2 (Plod2).